The following is a 165-amino-acid chain: Phosphopantetheine adenylyltransferase (165 aa).

A substrate-binding site is contributed by Ser-9. ATP is bound by residues 9–10 and His-17; that span reads SF. Positions 41, 75, and 89 each coordinate substrate. ATP-binding positions include 90–92, Glu-100, and 125–131; these read GVR and YLFVRSD.

The protein belongs to the bacterial CoaD family. As to quaternary structure, homohexamer. Requires Mg(2+) as cofactor.

It is found in the cytoplasm. The catalysed reaction is (R)-4'-phosphopantetheine + ATP + H(+) = 3'-dephospho-CoA + diphosphate. It functions in the pathway cofactor biosynthesis; coenzyme A biosynthesis; CoA from (R)-pantothenate: step 4/5. In terms of biological role, reversibly transfers an adenylyl group from ATP to 4'-phosphopantetheine, yielding dephospho-CoA (dPCoA) and pyrophosphate. The chain is Phosphopantetheine adenylyltransferase from Borrelia duttonii (strain Ly).